The primary structure comprises 366 residues: MNRVPVTTSSRTYDVLIGHEILRDAGKHIRVVLPKAKRAFVITSAPVRKHWAGIVTDALTAEGFEVIFLEMEDGERAKNMASVEDLALKMMAKGADRQSIICALGGGVVGDVAGFVASVFMRGIPVIQMPTTFLAQVDSSIGGKTGVNLKAGKNLVGTFYQPWLVLADPGVFSTLPEREFRSGLYESLKCGVIRRPDLFDRMERDRQRIVERDPGLIEWLITESVRVKADVVGADEHESGERRILNFGHTIGHALEAETAYKYFLHGEAVAWGMIAVTMIAAGLQRTDSATAQRIISLCLAYAPLPKIEVNAKKTANRVKGDKKTVHGVTHFILPREIGKVEVAIDVTDRAVVQAIEELKYLSFVG.

NAD(+)-binding positions include 73-78, 107-111, 131-132, K144, and K153; these read DGERAK, GVVGD, and TT. Residues E186, H249, and H266 each contribute to the Zn(2+) site.

The protein belongs to the sugar phosphate cyclases superfamily. Dehydroquinate synthase family. Co(2+) is required as a cofactor. Requires Zn(2+) as cofactor. NAD(+) serves as cofactor.

It is found in the cytoplasm. The enzyme catalyses 7-phospho-2-dehydro-3-deoxy-D-arabino-heptonate = 3-dehydroquinate + phosphate. Its pathway is metabolic intermediate biosynthesis; chorismate biosynthesis; chorismate from D-erythrose 4-phosphate and phosphoenolpyruvate: step 2/7. Catalyzes the conversion of 3-deoxy-D-arabino-heptulosonate 7-phosphate (DAHP) to dehydroquinate (DHQ). The protein is 3-dehydroquinate synthase of Koribacter versatilis (strain Ellin345).